We begin with the raw amino-acid sequence, 96 residues long: Large ribosomal subunit protein uL23 (96 aa).

This sequence belongs to the universal ribosomal protein uL23 family. As to quaternary structure, part of the 50S ribosomal subunit. Contacts protein L29, and trigger factor when it is bound to the ribosome.

Functionally, one of the early assembly proteins it binds 23S rRNA. One of the proteins that surrounds the polypeptide exit tunnel on the outside of the ribosome. Forms the main docking site for trigger factor binding to the ribosome. The polypeptide is Large ribosomal subunit protein uL23 (Caldanaerobacter subterraneus subsp. tengcongensis (strain DSM 15242 / JCM 11007 / NBRC 100824 / MB4) (Thermoanaerobacter tengcongensis)).